A 292-amino-acid polypeptide reads, in one-letter code: Ribonuclease HIII (292 aa).

The region spanning 76 to 292 is the RNase H type-2 domain; the sequence is TNLIGTDEVG…TQKAMKIAQL (217 aa). Positions 82, 83, and 186 each coordinate a divalent metal cation.

Belongs to the RNase HII family. RnhC subfamily. Mn(2+) serves as cofactor. Requires Mg(2+) as cofactor.

It localises to the cytoplasm. The enzyme catalyses Endonucleolytic cleavage to 5'-phosphomonoester.. Endonuclease that specifically degrades the RNA of RNA-DNA hybrids. This is Ribonuclease HIII from Lactococcus lactis subsp. cremoris (strain SK11).